The sequence spans 348 residues: Probable dual-specificity RNA methyltransferase RlmN (348 aa).

Glutamate 92 (proton acceptor) is an active-site residue. Residues 98–331 (HPDRVTACIS…NEIRREKGTD (234 aa)) enclose the Radical SAM core domain. Cysteine 105 and cysteine 336 are disulfide-bonded. The [4Fe-4S] cluster site is built by cysteine 112, cysteine 116, and cysteine 119. S-adenosyl-L-methionine-binding positions include 159–160 (GE), serine 191, 214–216 (SLH), and asparagine 290. Cysteine 336 acts as the S-methylcysteine intermediate in catalysis.

This sequence belongs to the radical SAM superfamily. RlmN family. Requires [4Fe-4S] cluster as cofactor.

The protein localises to the cytoplasm. It carries out the reaction adenosine(2503) in 23S rRNA + 2 reduced [2Fe-2S]-[ferredoxin] + 2 S-adenosyl-L-methionine = 2-methyladenosine(2503) in 23S rRNA + 5'-deoxyadenosine + L-methionine + 2 oxidized [2Fe-2S]-[ferredoxin] + S-adenosyl-L-homocysteine. The catalysed reaction is adenosine(37) in tRNA + 2 reduced [2Fe-2S]-[ferredoxin] + 2 S-adenosyl-L-methionine = 2-methyladenosine(37) in tRNA + 5'-deoxyadenosine + L-methionine + 2 oxidized [2Fe-2S]-[ferredoxin] + S-adenosyl-L-homocysteine. Its function is as follows. Specifically methylates position 2 of adenine 2503 in 23S rRNA and position 2 of adenine 37 in tRNAs. This Fervidobacterium nodosum (strain ATCC 35602 / DSM 5306 / Rt17-B1) protein is Probable dual-specificity RNA methyltransferase RlmN.